A 199-amino-acid chain; its full sequence is NADH-quinone oxidoreductase subunit C (199 aa).

This sequence belongs to the complex I 30 kDa subunit family. As to quaternary structure, NDH-1 is composed of 14 different subunits. Subunits NuoB, C, D, E, F, and G constitute the peripheral sector of the complex.

It is found in the cell inner membrane. The catalysed reaction is a quinone + NADH + 5 H(+)(in) = a quinol + NAD(+) + 4 H(+)(out). Functionally, NDH-1 shuttles electrons from NADH, via FMN and iron-sulfur (Fe-S) centers, to quinones in the respiratory chain. The immediate electron acceptor for the enzyme in this species is believed to be ubiquinone. Couples the redox reaction to proton translocation (for every two electrons transferred, four hydrogen ions are translocated across the cytoplasmic membrane), and thus conserves the redox energy in a proton gradient. In Cupriavidus taiwanensis (strain DSM 17343 / BCRC 17206 / CCUG 44338 / CIP 107171 / LMG 19424 / R1) (Ralstonia taiwanensis (strain LMG 19424)), this protein is NADH-quinone oxidoreductase subunit C.